A 154-amino-acid chain; its full sequence is 3-hydroxyacyl-[acyl-carrier-protein] dehydratase FabZ (154 aa).

Histidine 59 is a catalytic residue.

This sequence belongs to the thioester dehydratase family. FabZ subfamily.

It is found in the cytoplasm. The enzyme catalyses a (3R)-hydroxyacyl-[ACP] = a (2E)-enoyl-[ACP] + H2O. Its function is as follows. Involved in unsaturated fatty acids biosynthesis. Catalyzes the dehydration of short chain beta-hydroxyacyl-ACPs and long chain saturated and unsaturated beta-hydroxyacyl-ACPs. The sequence is that of 3-hydroxyacyl-[acyl-carrier-protein] dehydratase FabZ from Bartonella bacilliformis (strain ATCC 35685 / KC583 / Herrer 020/F12,63).